The chain runs to 77 residues: Large ribosomal subunit protein uL29 (77 aa).

Belongs to the universal ribosomal protein uL29 family.

This is Large ribosomal subunit protein uL29 (rpmC) from Mycobacterium bovis (strain ATCC BAA-935 / AF2122/97).